A 557-amino-acid chain; its full sequence is Formate--tetrahydrofolate ligase 2 (557 aa).

66 to 73 contacts ATP; it reads TPAGEGKT.

Belongs to the formate--tetrahydrofolate ligase family.

The catalysed reaction is (6S)-5,6,7,8-tetrahydrofolate + formate + ATP = (6R)-10-formyltetrahydrofolate + ADP + phosphate. The protein operates within one-carbon metabolism; tetrahydrofolate interconversion. The chain is Formate--tetrahydrofolate ligase 2 from Streptococcus pyogenes serotype M5 (strain Manfredo).